The sequence spans 141 residues: MSKALIKFIRLSPTKARLIAREVQGMNAELAMASLKFMPNKGAKYIANAISSAVANGGFEANEVIVKSCRVDVAAVLKRFRPRARGSASRIRKPTSHILVEVVKAEVKAEEKKTVAKKTTTTKAPAKKTTSTKKATAKKES.

Positions 110–141 (EEKKTVAKKTTTTKAPAKKTTSTKKATAKKES) are disordered. The span at 117 to 134 (KKTTTTKAPAKKTTSTKK) shows a compositional bias: low complexity.

It belongs to the universal ribosomal protein uL22 family. Part of the 50S ribosomal subunit.

In terms of biological role, this protein binds specifically to 23S rRNA; its binding is stimulated by other ribosomal proteins, e.g. L4, L17, and L20. It is important during the early stages of 50S assembly. It makes multiple contacts with different domains of the 23S rRNA in the assembled 50S subunit and ribosome. The globular domain of the protein is located near the polypeptide exit tunnel on the outside of the subunit, while an extended beta-hairpin is found that lines the wall of the exit tunnel in the center of the 70S ribosome. The sequence is that of Large ribosomal subunit protein uL22 from Campylobacter jejuni subsp. doylei (strain ATCC BAA-1458 / RM4099 / 269.97).